The sequence spans 127 residues: Aspartate 1-decarboxylase (127 aa).

Residue Ser-25 is the Schiff-base intermediate with substrate; via pyruvic acid of the active site. A Pyruvic acid (Ser) modification is found at Ser-25. Residue Thr-57 coordinates substrate. Tyr-58 functions as the Proton donor in the catalytic mechanism. 73-75 (GAA) provides a ligand contact to substrate.

Belongs to the PanD family. In terms of assembly, heterooctamer of four alpha and four beta subunits. Pyruvate serves as cofactor. Post-translationally, is synthesized initially as an inactive proenzyme, which is activated by self-cleavage at a specific serine bond to produce a beta-subunit with a hydroxyl group at its C-terminus and an alpha-subunit with a pyruvoyl group at its N-terminus.

It is found in the cytoplasm. The catalysed reaction is L-aspartate + H(+) = beta-alanine + CO2. It functions in the pathway cofactor biosynthesis; (R)-pantothenate biosynthesis; beta-alanine from L-aspartate: step 1/1. In terms of biological role, catalyzes the pyruvoyl-dependent decarboxylation of aspartate to produce beta-alanine. In Halalkalibacterium halodurans (strain ATCC BAA-125 / DSM 18197 / FERM 7344 / JCM 9153 / C-125) (Bacillus halodurans), this protein is Aspartate 1-decarboxylase.